The following is a 314-amino-acid chain: Ribosome production factor 2 homolog (314 aa).

One can recognise a Brix domain in the interval 28–238 (KKTLILHGTK…IRRNRLPNDS (211 aa)). Residues 238–314 (SLMKEAMRTS…VAKKMKVSSE (77 aa)) form a disordered region. Basic and acidic residues-rich tracts occupy residues 239–249 (LMKEAMRTSKD) and 275–314 (QKLKEMKLFDKSKGSKRERKDAKLKHKEETVAKKMKVSSE).

Belongs to the RPF2 family.

It is found in the nucleus. The protein localises to the nucleolus. This Arabidopsis thaliana (Mouse-ear cress) protein is Ribosome production factor 2 homolog.